Here is a 320-residue protein sequence, read N- to C-terminus: Dipeptide transport system permease protein DppC (320 aa).

A run of 6 helical transmembrane segments spans residues 56–76 (LAMAGLFILLFLFVMAVIGPF), 121–141 (LFVGVMAALIDFLIGVIYGGV), 154–176 (MRIIEVLYGLPYLLVVILLMVLM), 230–252 (LLPNTMGAIIVQMTLTVPAAIFA), 267–287 (FASWGVMANDGLPTILSGHWW), and 289–309 (LFFPAFFISLTMYAFNVLGDG). Residues 117–307 (ARISLFVGVM…LTMYAFNVLG (191 aa)) enclose the ABC transmembrane type-1 domain.

Belongs to the binding-protein-dependent transport system permease family. OppBC subfamily.

Its subcellular location is the cell membrane. Probably part of the ABC transporter DppBCDE involved in dipeptide transport. Responsible for the translocation of the substrate across the membrane. This chain is Dipeptide transport system permease protein DppC (dppC), found in Bacillus subtilis (strain 168).